Consider the following 432-residue polypeptide: Adenylosuccinate synthetase (432 aa).

Residues 13–19 and 41–43 contribute to the GTP site; these read GDEGKGK and GHT. The active-site Proton acceptor is Asp14. Mg(2+)-binding residues include Asp14 and Gly41. IMP is bound by residues 14-17, 39-42, Thr130, Arg144, Gln225, Thr240, and Arg304; these read DEGK and NAGH. His42 functions as the Proton donor in the catalytic mechanism. 300 to 306 is a substrate binding site; the sequence is ATTGRRR. Residues Arg306, 332 to 334, and 415 to 417 contribute to the GTP site; these read KLD and STG.

The protein belongs to the adenylosuccinate synthetase family. As to quaternary structure, homodimer. Mg(2+) serves as cofactor.

The protein localises to the cytoplasm. The catalysed reaction is IMP + L-aspartate + GTP = N(6)-(1,2-dicarboxyethyl)-AMP + GDP + phosphate + 2 H(+). It participates in purine metabolism; AMP biosynthesis via de novo pathway; AMP from IMP: step 1/2. In terms of biological role, plays an important role in the de novo pathway of purine nucleotide biosynthesis. Catalyzes the first committed step in the biosynthesis of AMP from IMP. This Pectobacterium carotovorum subsp. carotovorum (strain PC1) protein is Adenylosuccinate synthetase.